The sequence spans 305 residues: MIRQRTLKSIVQMTGVGLHSGRKVTLTLRPAAANTGVIYRRTDLNPPVDFPADPESVRDTMLCTALVNDEGVRISTVEHLNAALAGMGIDNVVIEVDAPEIPIMDGSASPFVYLLQSAGIEELNTAKKFIRIKKPVRIEDGDKWAEIRPYNGFRLDFTIDFNHPAIESDDQKLVFDFSSQSFIKDISRARTFGFMRDIEYLQSQNLCLGGSFDCAIVLDDYRILNEDGLRFDNEFVTHKVLDAVGDLYMSGHSILGELRAYKSGHALNNQLLRAVLADQEAWEWTTIEDEQESPVAFMQPGMVLA.

Zn(2+) is bound by residues His-79, His-238, and Asp-242. His-265 acts as the Proton donor in catalysis.

This sequence belongs to the LpxC family. It depends on Zn(2+) as a cofactor.

The catalysed reaction is a UDP-3-O-[(3R)-3-hydroxyacyl]-N-acetyl-alpha-D-glucosamine + H2O = a UDP-3-O-[(3R)-3-hydroxyacyl]-alpha-D-glucosamine + acetate. It functions in the pathway glycolipid biosynthesis; lipid IV(A) biosynthesis; lipid IV(A) from (3R)-3-hydroxytetradecanoyl-[acyl-carrier-protein] and UDP-N-acetyl-alpha-D-glucosamine: step 2/6. Its function is as follows. Catalyzes the hydrolysis of UDP-3-O-myristoyl-N-acetylglucosamine to form UDP-3-O-myristoylglucosamine and acetate, the committed step in lipid A biosynthesis. In Aliivibrio fischeri (strain ATCC 700601 / ES114) (Vibrio fischeri), this protein is UDP-3-O-acyl-N-acetylglucosamine deacetylase.